The following is a 268-amino-acid chain: L-aspartate dehydrogenase (268 aa).

Residues A125 and N191 each contribute to the NAD(+) site. H221 is a catalytic residue.

The protein belongs to the L-aspartate dehydrogenase family.

The enzyme catalyses L-aspartate + NADP(+) + H2O = oxaloacetate + NH4(+) + NADPH + H(+). It catalyses the reaction L-aspartate + NAD(+) + H2O = oxaloacetate + NH4(+) + NADH + H(+). Its pathway is cofactor biosynthesis; NAD(+) biosynthesis; iminoaspartate from L-aspartate (dehydrogenase route): step 1/1. In terms of biological role, specifically catalyzes the NAD or NADP-dependent dehydrogenation of L-aspartate to iminoaspartate. This is L-aspartate dehydrogenase from Brucella anthropi (strain ATCC 49188 / DSM 6882 / CCUG 24695 / JCM 21032 / LMG 3331 / NBRC 15819 / NCTC 12168 / Alc 37) (Ochrobactrum anthropi).